A 197-amino-acid polypeptide reads, in one-letter code: UPF0725 protein At5g41640 (197 aa).

It belongs to the UPF0725 (EMB2204) family.

In Arabidopsis thaliana (Mouse-ear cress), this protein is UPF0725 protein At5g41640.